Here is a 652-residue protein sequence, read N- to C-terminus: Acetyl-coenzyme A synthetase (652 aa).

Residues 191–194, threonine 311, and asparagine 335 contribute to the CoA site; that span reads RAGR. ATP contacts are provided by residues 387 to 389, 411 to 416, aspartate 500, and arginine 515; these read GEP and DTWWQT. Residue serine 523 participates in CoA binding. Position 526 (arginine 526) interacts with ATP. Residues valine 537, histidine 539, and isoleucine 542 each contribute to the Mg(2+) site. Arginine 584 is a binding site for CoA. Lysine 609 is modified (N6-acetyllysine; by Pat).

The protein belongs to the ATP-dependent AMP-binding enzyme family. As to quaternary structure, monomer. It depends on Mg(2+) as a cofactor. Post-translationally, acetylated. Deacetylation by the SIR2-homolog deacetylase activates the enzyme.

It carries out the reaction acetate + ATP + CoA = acetyl-CoA + AMP + diphosphate. Functionally, catalyzes the conversion of acetate into acetyl-CoA (AcCoA), an essential intermediate at the junction of anabolic and catabolic pathways. Acs undergoes a two-step reaction. In the first half reaction, Acs combines acetate with ATP to form acetyl-adenylate (AcAMP) intermediate. In the second half reaction, it can then transfer the acetyl group from AcAMP to the sulfhydryl group of CoA, forming the product AcCoA. Required for acetate recapture but not for acetate excretion when this organism is grown on ethanolamine. In terms of biological role, enables the cell to use acetate during aerobic growth to generate energy via the TCA cycle, and biosynthetic compounds via the glyoxylate shunt. Acetylates CheY, the response regulator involved in flagellar movement and chemotaxis. This is Acetyl-coenzyme A synthetase from Salmonella typhimurium (strain LT2 / SGSC1412 / ATCC 700720).